The chain runs to 525 residues: Protein shisa-6 (525 aa).

Positions 1 to 30 (MALRRLLLPPLLLSLLLSLASLHLPPGADA) are cleaved as a signal peptide. Over 31–180 (ARGRSGNRTL…NKYDPEKDKT (150 aa)) the chain is Extracellular. 2 N-linked (GlcNAc...) asparagine glycosylation sites follow: N37 and N62. Residues 181–201 (NFTVYITCGVIAFVIVAGVFA) traverse the membrane as a helical segment. The Cytoplasmic portion of the chain corresponds to 202 to 525 (KVSYDKAHRP…YTASKTEVTV (324 aa)). Residues 241-294 (ISAIDTSPKENTPVRSTSKNHYTPVRTAKQTPGDRQYNHPILSSATQTPTHEKP) are disordered. Residues 243 to 261 (AIDTSPKENTPVRSTSKNH) are compositionally biased toward polar residues. Residues S416, S422, and S434 each carry the phosphoserine modification. Phosphothreonine is present on T458. Residues 469 to 495 (MHSHPSASNNSYATLGQSQTAAKRHAF) are disordered. Residues 473–489 (PSASNNSYATLGQSQTA) are compositionally biased toward polar residues. The residue at position 502 (T502) is a Phosphothreonine. The short motif at 522-525 (EVTV) is the PDZ-binding element.

The protein belongs to the shisa family. In terms of assembly, component of the postsynaptic hippocampal AMPA-type glutamate receptor (AMPAR) complex, at least composed of pore forming AMPAR subunits GRIA1, GRIA2 and GRIA3 and AMPAR auxiliary proteins SHISA6 and SHISA7. Interacts (via PDZ-binding motif) with DLG4/PSD-95 (via PDZ domain); the interaction is direct. N-glycosylated. As to expression, highly expressed in cerebellum and hippocampal neurons: CA1 stratum oriens and stratum radiatum, CA3 stratum oriens and stratum lucidum, and the dentate gyrus polymorphic layer. Expressed in other brain structures including olfactory bulb, cortex, amygdala and midbrain (at protein level). Also expressed in a subset of spermatogonial stem cells. Also expressed in eye, heart, kidney, lung, muscle and spleen. Isoform 2: Specifically expressed in hippocampus.

It localises to the postsynaptic density membrane. Its function is as follows. Involved in maintenance of high-frequency synaptic transmission at hippocampal CA3-CA1 synapses. Regulates AMPA-type glutamate receptor (AMPAR) immobilization at postsynaptic density keeping the channels in an activated state in the presence of glutamate and preventing synaptic depression. May play a role in self-renewal and differentiation of spermatogonial stem cells by inhibiting canonical Wnt signaling pathway. This is Protein shisa-6 from Mus musculus (Mouse).